The following is a 692-amino-acid chain: Translation initiation factor IF-2 (692 aa).

The segment at 51–114 is disordered; the sequence is KAKPENAKKG…KPAETPGKIT (64 aa). The segment covering 59-84 has biased composition (low complexity); sequence KGQNQKQSNNQQQNRQKQNQKNQSKP. Residues 85–94 are compositionally biased toward basic residues; it reads NKNKKQKGPK. The tr-type G domain occupies 193-362; that stretch reads ERPAVVTIMG…LLVSEVEELK (170 aa). The tract at residues 202-209 is G1; sequence GHVDHGKT. 202–209 contacts GTP; it reads GHVDHGKT. The tract at residues 227 to 231 is G2; sequence GITQH. Positions 248–251 are G3; sequence DTPG. GTP-binding positions include 248–252 and 302–305; these read DTPGH and NKMD. Residues 302 to 305 are G4; sequence NKMD. The interval 338–340 is G5; the sequence is SAI.

The protein belongs to the TRAFAC class translation factor GTPase superfamily. Classic translation factor GTPase family. IF-2 subfamily.

The protein resides in the cytoplasm. Its function is as follows. One of the essential components for the initiation of protein synthesis. Protects formylmethionyl-tRNA from spontaneous hydrolysis and promotes its binding to the 30S ribosomal subunits. Also involved in the hydrolysis of GTP during the formation of the 70S ribosomal complex. This Oceanobacillus iheyensis (strain DSM 14371 / CIP 107618 / JCM 11309 / KCTC 3954 / HTE831) protein is Translation initiation factor IF-2.